A 216-amino-acid chain; its full sequence is MAAPPARARADYDYLIKLLLIGDSGVGKSCLLLRFSDGSFTTSFITTIGIDFKIRTIELDGKRIKLQIWDTAGQERFRTITTAYYRGAMGILLVYDVTDESSFNNIRNWIRNIEQHASDNVNKILVGNKADMDESKRAVPTAKGQALADEYGIKFFETSAKTNLNVEEVFFSIGRDIKQRLSDTDSRAEPATIKISQTDQAAGAGQATQKSACCGT.

22–29 (GDSGVGKS) contacts GTP. Residues 44-52 (FITTIGIDF) carry the Effector region motif. GTP contacts are provided by residues 70–74 (DTAGQ), 128–131 (NKAD), and 159–160 (SA). 2 S-geranylgeranyl cysteine lipidation sites follow: cysteine 213 and cysteine 214.

It belongs to the small GTPase superfamily. Rab family. In terms of assembly, interacts with PI5K2.

It is found in the golgi apparatus membrane. It localises to the cell membrane. Functionally, involved in membrane trafficking from the Golgi to the plasma membrane. The chain is Ras-related protein RABE1c (RABE1C) from Arabidopsis thaliana (Mouse-ear cress).